A 457-amino-acid polypeptide reads, in one-letter code: Nuclear hormone receptor family member nhr-20 (457 aa).

Residues 16-92 constitute a DNA-binding region (nuclear receptor); that stretch reads TSKCLVCEHP…AGMRRECVQK (77 aa). NR C4-type zinc fingers lie at residues 19 to 40 and 56 to 80; these read CLVCEHPDGGSAHFGSTSCLAC and CKKDKNCVIFHELRMICRACRFDKC. The interval 125-182 is disordered; that stretch reads GDQTDDNSPLSIEKKSPPGLLPNDSPMMADFKFDPSDIPSTSGGSTQRLERSPSPKLA. A compositionally biased stretch (polar residues) spans 162 to 171; the sequence is IPSTSGGSTQ. An NR LBD domain is found at 201 to 457; it reads QLKNSMDRRR…DALSKSLLTL (257 aa).

It belongs to the nuclear hormone receptor family.

It localises to the nucleus. Functionally, orphan nuclear receptor. In Caenorhabditis elegans, this protein is Nuclear hormone receptor family member nhr-20 (nhr-20).